The sequence spans 46 residues: Lantibiotic streptin (46 aa).

Residues 1-24 (MNNTIKDFDLDLKTNKKDTATPYV) constitute a propeptide that is removed on maturation.

Belongs to the type A lantibiotic family. Maturation of lantibiotics involves the enzymatic conversion of Thr, and Ser into dehydrated AA and the formation of thioether bonds with cysteine. This is followed by membrane translocation and cleavage of the modified precursor.

Its function is as follows. Lanthionine-containing peptide antibiotic (lantibiotic) active on certain Gram-positive bacteria. The bactericidal activity of lantibiotics is based on depolarization of energized bacterial cytoplasmic membranes, initiated by the formation of aqueous transmembrane pores. This is Lantibiotic streptin (srtA) from Streptococcus pyogenes serotype M1.